Reading from the N-terminus, the 188-residue chain is Putative pre-16S rRNA nuclease (188 aa).

The tract at residues His-144–Gly-188 is disordered. Residues Lys-154 to Gly-163 are compositionally biased toward basic residues.

It belongs to the YqgF nuclease family.

Its subcellular location is the cytoplasm. In terms of biological role, could be a nuclease involved in processing of the 5'-end of pre-16S rRNA. This Kineococcus radiotolerans (strain ATCC BAA-149 / DSM 14245 / SRS30216) protein is Putative pre-16S rRNA nuclease.